Consider the following 236-residue polypeptide: 2,3,4,5-tetrahydropyridine-2,6-dicarboxylate N-acetyltransferase (236 aa).

The protein belongs to the transferase hexapeptide repeat family. DapH subfamily.

The catalysed reaction is (S)-2,3,4,5-tetrahydrodipicolinate + acetyl-CoA + H2O = L-2-acetamido-6-oxoheptanedioate + CoA. It participates in amino-acid biosynthesis; L-lysine biosynthesis via DAP pathway; LL-2,6-diaminopimelate from (S)-tetrahydrodipicolinate (acetylase route): step 1/3. In terms of biological role, catalyzes the transfer of an acetyl group from acetyl-CoA to tetrahydrodipicolinate. The polypeptide is 2,3,4,5-tetrahydropyridine-2,6-dicarboxylate N-acetyltransferase (Limosilactobacillus reuteri (strain DSM 20016) (Lactobacillus reuteri)).